A 71-amino-acid polypeptide reads, in one-letter code: Small ribosomal subunit protein bS21 (71 aa).

The disordered stretch occupies residues 40–71; it reads KPTQVRKRKQAAAVKRHMKRLNREQQRRQRPY. The span at 43–59 shows a compositional bias: basic residues; it reads QVRKRKQAAAVKRHMKR. Over residues 60 to 71 the composition is skewed to basic and acidic residues; it reads LNREQQRRQRPY.

This sequence belongs to the bacterial ribosomal protein bS21 family.

The sequence is that of Small ribosomal subunit protein bS21 from Halorhodospira halophila (strain DSM 244 / SL1) (Ectothiorhodospira halophila (strain DSM 244 / SL1)).